A 226-amino-acid chain; its full sequence is PKHD-type hydroxylase Nwi_0701 (226 aa).

A Fe2OG dioxygenase domain is found at 78–178; sequence KVLPPRFNRY…RLAAFFWTQS (101 aa). Fe cation contacts are provided by His-96, Asp-98, and His-159. Residue Arg-169 participates in 2-oxoglutarate binding.

It depends on Fe(2+) as a cofactor. L-ascorbate serves as cofactor.

This is PKHD-type hydroxylase Nwi_0701 from Nitrobacter winogradskyi (strain ATCC 25391 / DSM 10237 / CIP 104748 / NCIMB 11846 / Nb-255).